Reading from the N-terminus, the 412-residue chain is Multifunctional CCA protein (412 aa).

2 residues coordinate ATP: Gly8 and Arg11. CTP-binding residues include Gly8 and Arg11. The Mg(2+) site is built by Asp21 and Asp23. ATP-binding residues include Arg91, Arg137, and Arg140. Residues Arg91, Arg137, and Arg140 each contribute to the CTP site. The HD domain occupies 228-329 (TGIHTLMTLS…VKLFDSIDAW (102 aa)).

Belongs to the tRNA nucleotidyltransferase/poly(A) polymerase family. Bacterial CCA-adding enzyme type 1 subfamily. In terms of assembly, monomer. Can also form homodimers and oligomers. It depends on Mg(2+) as a cofactor. Requires Ni(2+) as cofactor.

The catalysed reaction is a tRNA precursor + 2 CTP + ATP = a tRNA with a 3' CCA end + 3 diphosphate. The enzyme catalyses a tRNA with a 3' CCA end + 2 CTP + ATP = a tRNA with a 3' CCACCA end + 3 diphosphate. Catalyzes the addition and repair of the essential 3'-terminal CCA sequence in tRNAs without using a nucleic acid template. Adds these three nucleotides in the order of C, C, and A to the tRNA nucleotide-73, using CTP and ATP as substrates and producing inorganic pyrophosphate. tRNA 3'-terminal CCA addition is required both for tRNA processing and repair. Also involved in tRNA surveillance by mediating tandem CCA addition to generate a CCACCA at the 3' terminus of unstable tRNAs. While stable tRNAs receive only 3'-terminal CCA, unstable tRNAs are marked with CCACCA and rapidly degraded. The sequence is that of Multifunctional CCA protein from Escherichia coli O8 (strain IAI1).